The sequence spans 157 residues: Ribonuclease H (157 aa).

Residues 1–146 enclose the RNase H type-1 domain; it reads MPELFAYTDG…ADALAREGMA (146 aa). Mg(2+) contacts are provided by Asp-9, Glu-52, Asp-74, and Asp-138.

The protein belongs to the RNase H family. In terms of assembly, monomer. Requires Mg(2+) as cofactor.

It localises to the cytoplasm. The catalysed reaction is Endonucleolytic cleavage to 5'-phosphomonoester.. In terms of biological role, endonuclease that specifically degrades the RNA of RNA-DNA hybrids. This Dinoroseobacter shibae (strain DSM 16493 / NCIMB 14021 / DFL 12) protein is Ribonuclease H.